The following is a 777-amino-acid chain: Endonuclease MutS2 (777 aa).

Residue 328 to 335 coordinates ATP; that stretch reads GPNTGGKT. The Smr domain occupies 702–777; the sequence is LDLRGKRYEE…GSGCTIATLG (76 aa).

The protein belongs to the DNA mismatch repair MutS family. MutS2 subfamily. As to quaternary structure, homodimer. Binds to stalled ribosomes, contacting rRNA.

Endonuclease that is involved in the suppression of homologous recombination and thus may have a key role in the control of bacterial genetic diversity. Functionally, acts as a ribosome collision sensor, splitting the ribosome into its 2 subunits. Detects stalled/collided 70S ribosomes which it binds and splits by an ATP-hydrolysis driven conformational change. Acts upstream of the ribosome quality control system (RQC), a ribosome-associated complex that mediates the extraction of incompletely synthesized nascent chains from stalled ribosomes and their subsequent degradation. Probably generates substrates for RQC. This chain is Endonuclease MutS2, found in Streptococcus uberis (strain ATCC BAA-854 / 0140J).